A 60-amino-acid chain; its full sequence is Ribosome biogenesis protein Nop10 (60 aa).

The disordered stretch occupies residues 29 to 60 (CDGPTENSAPAPFSPEDPYGEYRRRVRRRASE).

This sequence belongs to the NOP10 family.

In terms of biological role, involved in ribosome biogenesis; more specifically in 18S rRNA pseudouridylation and in cleavage of pre-rRNA. The sequence is that of Ribosome biogenesis protein Nop10 from Halorubrum lacusprofundi (strain ATCC 49239 / DSM 5036 / JCM 8891 / ACAM 34).